A 505-amino-acid chain; its full sequence is Succinyl-CoA:acetate CoA-transferase (505 aa).

269–273 (GVGNV) is a binding site for CoA. Residue E294 is the 5-glutamyl coenzyme A thioester intermediate of the active site. I364, N384, G388, and K408 together coordinate CoA.

The protein belongs to the acetyl-CoA hydrolase/transferase family. Homodimer.

It catalyses the reaction succinyl-CoA + acetate = succinate + acetyl-CoA. It participates in metabolic intermediate biosynthesis; acetyl-CoA biosynthesis. Subject to competitive inhibition by coenzyme A (CoA). Its function is as follows. Utilizes succinyl-CoA to convert toxic acetate to acetyl-CoA and succinate. Required for growth on acetic acid and for resistance to high levels of acetic acid. Also has low activity with acetoacetate as substrate. In Acetobacter aceti, this protein is Succinyl-CoA:acetate CoA-transferase.